An 87-amino-acid chain; its full sequence is Small ribosomal subunit protein uS15c (87 aa).

It belongs to the universal ribosomal protein uS15 family. Part of the 30S ribosomal subunit.

Its subcellular location is the plastid. It is found in the chloroplast. The polypeptide is Small ribosomal subunit protein uS15c (rps15) (Oenothera argillicola (Appalachian evening primrose)).